Consider the following 274-residue polypeptide: Diaminopimelate epimerase (274 aa).

Substrate-binding residues include asparagine 11, glutamine 44, and asparagine 64. The Proton donor role is filled by cysteine 73. Residues 74-75 (GN), asparagine 157, asparagine 190, and 208-209 (ER) contribute to the substrate site. The Proton acceptor role is filled by cysteine 217. 218 to 219 (GS) contributes to the substrate binding site.

The protein belongs to the diaminopimelate epimerase family. As to quaternary structure, homodimer.

Its subcellular location is the cytoplasm. The catalysed reaction is (2S,6S)-2,6-diaminopimelate = meso-2,6-diaminopimelate. It functions in the pathway amino-acid biosynthesis; L-lysine biosynthesis via DAP pathway; DL-2,6-diaminopimelate from LL-2,6-diaminopimelate: step 1/1. In terms of biological role, catalyzes the stereoinversion of LL-2,6-diaminopimelate (L,L-DAP) to meso-diaminopimelate (meso-DAP), a precursor of L-lysine and an essential component of the bacterial peptidoglycan. The protein is Diaminopimelate epimerase of Haemophilus influenzae (strain PittEE).